The following is a 99-amino-acid chain: Aspartyl/glutamyl-tRNA(Asn/Gln) amidotransferase subunit C (99 aa).

It belongs to the GatC family. Heterotrimer of A, B and C subunits.

The enzyme catalyses L-glutamyl-tRNA(Gln) + L-glutamine + ATP + H2O = L-glutaminyl-tRNA(Gln) + L-glutamate + ADP + phosphate + H(+). The catalysed reaction is L-aspartyl-tRNA(Asn) + L-glutamine + ATP + H2O = L-asparaginyl-tRNA(Asn) + L-glutamate + ADP + phosphate + 2 H(+). In terms of biological role, allows the formation of correctly charged Asn-tRNA(Asn) or Gln-tRNA(Gln) through the transamidation of misacylated Asp-tRNA(Asn) or Glu-tRNA(Gln) in organisms which lack either or both of asparaginyl-tRNA or glutaminyl-tRNA synthetases. The reaction takes place in the presence of glutamine and ATP through an activated phospho-Asp-tRNA(Asn) or phospho-Glu-tRNA(Gln). This Polaromonas sp. (strain JS666 / ATCC BAA-500) protein is Aspartyl/glutamyl-tRNA(Asn/Gln) amidotransferase subunit C.